A 342-amino-acid chain; its full sequence is MTVKGKRITVHDMTLRDGMHPKRHQMTLDQMKAVATGLDAAGVPLIEVTHGDGLGGASVNYGFPAHTDEEYLGTVIPLLKLAKVSALLIPGIGTVDHLRMAKDLGVHTIRVATHCTEADVSEQHISLARQLEMDTVGFLMMAHKADSQRLISQARLMESYGANCIYITDSAGYMLPAEVKEKTSAVRAALRPETELGFHGHHNLAMGVANSVVAVESGATRIDAAAAGLGAGAGNTPMEVFIAVCNRMGIATGVDLFKMQDVAEDIVVPMMDHPIRIDRDALILGYAGVYSSFLLFAKRAEKKYGVSAREILIELGRRGMVGGQEDMIEDAAMTMAKARGPI.

The 253-residue stretch at 8–260 folds into the Pyruvate carboxyltransferase domain; the sequence is ITVHDMTLRD…ATGVDLFKMQ (253 aa). 16-17 is a binding site for substrate; sequence RD. D17 provides a ligand contact to Mn(2+). The active-site Proton acceptor is the H20. Substrate is bound by residues S170 and H199. The Mn(2+) site is built by H199 and H201. Y290 provides a ligand contact to substrate.

This sequence belongs to the 4-hydroxy-2-oxovalerate aldolase family.

It catalyses the reaction (S)-4-hydroxy-2-oxopentanoate = acetaldehyde + pyruvate. The protein is 4-hydroxy-2-oxovalerate aldolase of Albidiferax ferrireducens (strain ATCC BAA-621 / DSM 15236 / T118) (Rhodoferax ferrireducens).